We begin with the raw amino-acid sequence, 465 residues long: Cysteine--tRNA ligase (465 aa).

Position 27 (Cys27) interacts with Zn(2+). The 'HIGH' region signature appears at 29–39 (PTVYDDAHLGH). Cys207, His237, and Glu241 together coordinate Zn(2+). Positions 269 to 273 (KMSKS) match the 'KMSKS' region motif. Residue Lys272 coordinates ATP.

It belongs to the class-I aminoacyl-tRNA synthetase family. Monomer. Zn(2+) is required as a cofactor.

The protein resides in the cytoplasm. The catalysed reaction is tRNA(Cys) + L-cysteine + ATP = L-cysteinyl-tRNA(Cys) + AMP + diphosphate. The sequence is that of Cysteine--tRNA ligase (cysS) from Helicobacter pylori (strain ATCC 700392 / 26695) (Campylobacter pylori).